The chain runs to 132 residues: UPF0357 protein YCL012C (132 aa).

Positions 1 to 25 (MWDLFYFKVFFWVVLISLCIFMVHR) are cleaved as a signal peptide.

Belongs to the UPF0357 family.

This is UPF0357 protein YCL012C (YCL012C) from Saccharomyces bayanus (Yeast).